Here is a 329-residue protein sequence, read N- to C-terminus: Porphobilinogen deaminase (329 aa).

An S-(dipyrrolylmethanemethyl)cysteine modification is found at Cys-250.

Belongs to the HMBS family. In terms of assembly, monomer. It depends on dipyrromethane as a cofactor.

The enzyme catalyses 4 porphobilinogen + H2O = hydroxymethylbilane + 4 NH4(+). Its pathway is porphyrin-containing compound metabolism; protoporphyrin-IX biosynthesis; coproporphyrinogen-III from 5-aminolevulinate: step 2/4. In terms of biological role, tetrapolymerization of the monopyrrole PBG into the hydroxymethylbilane pre-uroporphyrinogen in several discrete steps. This chain is Porphobilinogen deaminase, found in Burkholderia pseudomallei (strain 668).